Here is a 197-residue protein sequence, read N- to C-terminus: MKLATITFFLLTEIFFYISYAEATRSGPDLCPTIISKRDWGGNAALRVGYTSKPLERVVIHHTVTPECANEARCSSRMVSMQNYHMDELGYDDISYNFVIGGDGRVYEGVGWHKKGSHSPGWDSQSIGIAFIGDFTNKLPSREMLDAAKDLIVCAIELGELTRGYKLLGARNVKATKSPGDKLYREIQNWEGFTRRP.

An N-terminal signal peptide occupies residues 1 to 23 (MKLATITFFLLTEIFFYISYAEA). Cystine bridges form between Cys31/Cys154 and Cys68/Cys74. An N-acetylmuramoyl-L-alanine amidase domain is found at 53–180 (KPLERVVIHH…RNVKATKSPG (128 aa)).

Belongs to the N-acetylmuramoyl-L-alanine amidase 2 family. Localizes to plasma (at protein level).

The protein localises to the secreted. Peptidoglycan-recognition protein probably involved in innate immunity by binding to peptidoglycans (PGN) of bacteria and activating the prophenoloxidase (proPO) cascade immune response. Binds to 1,3-beta-D-glucan and PGN. This is Peptidoglycan-recognition protein 1 (PGRP-1) from Holotrichia diomphalia (Korean black chafer).